Here is a 288-residue protein sequence, read N- to C-terminus: Plasmodesmata-located protein 6 (288 aa).

An N-terminal signal peptide occupies residues Met-1–Ala-22. The Extracellular portion of the chain corresponds to Ala-23 to Thr-256. 2 Gnk2-homologous domains span residues Asp-25 to Phe-132 and Asp-137 to Gly-234. 6 disulfides stabilise this stretch: Cys-32–Cys-110, Cys-84–Cys-95, Cys-98–Cys-123, Cys-145–Cys-212, Cys-188–Cys-197, and Cys-200–Cys-225. Residues Leu-257 to Met-277 traverse the membrane as a helical segment. The necessary and sufficient for plasmodesmal targeting stretch occupies residues Leu-257–Met-277. The Cytoplasmic segment spans residues Ala-278–Lys-288.

This sequence belongs to the cysteine-rich repeat secretory protein family. Plasmodesmata-located proteins (PDLD) subfamily. (Microbial infection) Interacts with Grapevine fanleaf virus (GFLV) 2B-MP. Highly expressed in inflorescence silique (at mRNA level).

The protein resides in the cell membrane. It localises to the cell junction. It is found in the plasmodesma. Its function is as follows. Modulates cell-to-cell trafficking. In Arabidopsis thaliana (Mouse-ear cress), this protein is Plasmodesmata-located protein 6.